A 432-amino-acid chain; its full sequence is Adenylosuccinate synthetase (432 aa).

Residues 13–19 (GDEGKGK) and 41–43 (GHT) each bind GTP. Residue aspartate 14 is the Proton acceptor of the active site. Residues aspartate 14 and glycine 41 each coordinate Mg(2+). Residues 14-17 (DEGK), 39-42 (NAGH), threonine 130, arginine 144, glutamine 225, threonine 240, and arginine 304 contribute to the IMP site. Histidine 42 acts as the Proton donor in catalysis. Position 300-306 (300-306 (ATTGRKR)) interacts with substrate. Residues arginine 306, 332 to 334 (KLD), and 415 to 417 (STG) each bind GTP.

It belongs to the adenylosuccinate synthetase family. As to quaternary structure, homodimer. Mg(2+) serves as cofactor.

It is found in the cytoplasm. It catalyses the reaction IMP + L-aspartate + GTP = N(6)-(1,2-dicarboxyethyl)-AMP + GDP + phosphate + 2 H(+). The protein operates within purine metabolism; AMP biosynthesis via de novo pathway; AMP from IMP: step 1/2. Functionally, plays an important role in the de novo pathway of purine nucleotide biosynthesis. Catalyzes the first committed step in the biosynthesis of AMP from IMP. This is Adenylosuccinate synthetase from Alteromonas mediterranea (strain DSM 17117 / CIP 110805 / LMG 28347 / Deep ecotype).